Reading from the N-terminus, the 127-residue chain is PanD regulatory factor (127 aa).

Positions 1–127 (MKLTIIRLEK…TAQQGGWEKC (127 aa)) constitute an N-acetyltransferase domain. Interaction with PanD regions lie at residues 43-48 (RFNERL) and 66-76 (LRVREVTRRRG). Residues 66-68 (LRV) and 72-79 (TRRRGVGQ) each bind CoA.

It belongs to the PanZ/PanM family. In terms of assembly, interacts with PanD in the presence of CoA. Forms a heterooctameric complex composed of four PanD subunits and four PanZ subunits. Monomer in solution.

Activation of PanD processing occurs even at low CoA concentrations. In contrast, full inhibition of PanD catalytic activity only occurs at sufficiently high CoA concentrations. Functionally, controls both the activation and catalytic activity of PanD in a coenzyme A (CoA)-dependent fashion. Binding of CoA or a derivative to PanZ leads to interaction with PanD, which promotes the processing and activation of pro-PanD, and subsequent substrate-mediated inhibition of the active form of PanD. Inhibition of PanD activity is probably the primary metabolic role of PanZ, allowing negative feedback regulation of pantothenate biosynthesis by CoA. In Escherichia coli (strain K12), this protein is PanD regulatory factor.